A 379-amino-acid chain; its full sequence is Sialidase-2 (379 aa).

Positions 20 to 23 (YRIP) match the FRIP motif motif. Residues arginine 21 and arginine 41 each contribute to the substrate site. The active-site Proton acceptor is the aspartate 46. A BNR 1 repeat occupies 127-138 (ITSTDHGKTWSA). 2 residues coordinate substrate: tyrosine 179 and tyrosine 181. One copy of the BNR 2 repeat lies at 197-208 (FLSHDHGSTWEL). Substrate is bound by residues glutamate 218, arginine 237, and arginine 303. The Nucleophile role is filled by tyrosine 333. Glutamate 354 is an active-site residue.

It belongs to the glycosyl hydrolase 33 family.

The protein localises to the cytoplasm. It carries out the reaction Hydrolysis of alpha-(2-&gt;3)-, alpha-(2-&gt;6)-, alpha-(2-&gt;8)- glycosidic linkages of terminal sialic acid residues in oligosaccharides, glycoproteins, glycolipids, colominic acid and synthetic substrates.. Catalyzes the removal of sialic acid (N-acetylneuraminic acid) moieties from glycoproteins, oligosaccharides and gangliosides. In Cricetulus griseus (Chinese hamster), this protein is Sialidase-2 (NEU2).